Reading from the N-terminus, the 1006-residue chain is Serine/threonine-protein phosphatase BSL3 (1006 aa).

Residues 1–67 (MDLDSSMVPE…QQQQQPQVTA (67 aa)) are disordered. Low complexity-rich tracts occupy residues 38–47 (SESESASLTP) and 54–67 (QQQQQQQQQPQVTA). Kelch repeat units follow at residues 138 to 184 (TSAG…VATA), 242 to 290 (YLMA…TASA), 295 to 345 (LLLL…VFVN), 351 to 398 (SGGA…DAAG), and 419 to 465 (LIFI…TPPG). 2 disordered regions span residues 454-494 (AAAA…LGSP) and 552-579 (GEVELPDRDRGAEATPSGKPSLSLIKPD). S616 carries the post-translational modification Phosphoserine. 4 residues coordinate Mn(2+): D709, H711, D743, and N775. H776 functions as the Proton donor in the catalytic mechanism. The Mn(2+) site is built by H828 and H907. At S964 the chain carries Phosphoserine. The disordered stretch occupies residues 982–1006 (NVNRPPTPTRGRPQNPNDRGSLAWI).

This sequence belongs to the PPP phosphatase family. BSU subfamily. Requires Mn(2+) as cofactor. Expressed throughout the plant, with a higher level in younger parts.

Its subcellular location is the nucleus. It catalyses the reaction O-phospho-L-seryl-[protein] + H2O = L-seryl-[protein] + phosphate. It carries out the reaction O-phospho-L-threonyl-[protein] + H2O = L-threonyl-[protein] + phosphate. Functionally, phosphatase involved in elongation process, probably by acting as a regulator of brassinolide signaling. The sequence is that of Serine/threonine-protein phosphatase BSL3 (BSL3) from Arabidopsis thaliana (Mouse-ear cress).